We begin with the raw amino-acid sequence, 140 residues long: MASPLRSLLFLLAVLAVAWAATPKQGPRMLGAPEEADANEEGVRRALDFAVSEYNKGSNDAYHSRAIQVVRARKQLVAGVNYFLDVEMGRTTCTKSQTNLTDCPFHDQPHLMRKALCSFQIYSVPWKGTHSLTKFSCKNA.

An N-terminal signal peptide occupies residues 1-20 (MASPLRSLLFLLAVLAVAWA). Residues 75–79 (QLVAG) carry the Secondary area of contact motif. Intrachain disulfides connect Cys93-Cys103 and Cys117-Cys137.

Belongs to the cystatin family.

The protein resides in the secreted. Its function is as follows. As an inhibitor of cysteine proteinases, this protein is thought to serve an important physiological role as a local regulator of this enzyme activity. The chain is Cystatin-C (Cst3) from Mus musculus (Mouse).